A 752-amino-acid polypeptide reads, in one-letter code: Mitochondrial Rho GTPase 1 (752 aa).

At 1–671 the chain is on the cytoplasmic side; the sequence is MRKDVRIVLA…RNALSYGTNR (671 aa). The region spanning 2–170 is the Miro 1 domain; sequence RKDVRIVLAG…FYFAQKAVLY (169 aa). Residues 11–18, 57–61, and 115–118 contribute to the GTP site; these read GDPDVGKS, DTSSS, and NKID. EF-hand domains lie at 186 to 221 and 333 to 368; these read ACVDALKRIFRLCDSDKDGLLSDGELNDFQRKCFDT and NGYQFLTDIFEVHDKDRDGALSEEELDSLFITAPDN. 8 residues coordinate Ca(2+): D199, D201, D203, E210, D346, D348, D350, and E357. The interval 426–460 is disordered; that stretch reads SSGSASTPAPIPLTPTGPPGSRPSRNRTPCPPSTI. The segment covering 434 to 446 has biased composition (pro residues); sequence APIPLTPTGPPGS. A Miro 2 domain is found at 481–651; the sequence is RSVFLGFVLG…YGLICTIAVD (171 aa). GTP contacts are provided by residues 490 to 497, 526 to 530, and 595 to 598; these read GAAGSGKT, EQAGA, and TKAD. The chain crosses the membrane as a helical; Anchor for type IV membrane protein span at residues 672-692; sequence WQFWGYIGLVVIGGGGAVWIC. The Mitochondrial intermembrane portion of the chain corresponds to 693–752; the sequence is AKVLKVPIGSTLGFGSSASTTSWWLSGAQARGAGGPNATKVSSWFDWIRWQSSSNVRSEL.

The protein belongs to the mitochondrial Rho GTPase family.

The protein resides in the mitochondrion outer membrane. Functionally, mitochondrial GTPase involved in mitochondrial trafficking. Probably involved in control of anterograde transport of mitochondria and their subcellular distribution. This chain is Mitochondrial Rho GTPase 1 (GEM1), found in Mycosarcoma maydis (Corn smut fungus).